The sequence spans 611 residues: Dihydroxy-acid dehydratase (611 aa).

D81 lines the Mg(2+) pocket. C122 contacts [2Fe-2S] cluster. Positions 123 and 124 each coordinate Mg(2+). N6-carboxylysine is present on K124. C195 provides a ligand contact to [2Fe-2S] cluster. Residue E491 coordinates Mg(2+). S517 serves as the catalytic Proton acceptor.

This sequence belongs to the IlvD/Edd family. Homodimer. The cofactor is [2Fe-2S] cluster. Mg(2+) serves as cofactor.

The catalysed reaction is (2R)-2,3-dihydroxy-3-methylbutanoate = 3-methyl-2-oxobutanoate + H2O. The enzyme catalyses (2R,3R)-2,3-dihydroxy-3-methylpentanoate = (S)-3-methyl-2-oxopentanoate + H2O. It participates in amino-acid biosynthesis; L-isoleucine biosynthesis; L-isoleucine from 2-oxobutanoate: step 3/4. It functions in the pathway amino-acid biosynthesis; L-valine biosynthesis; L-valine from pyruvate: step 3/4. Functions in the biosynthesis of branched-chain amino acids. Catalyzes the dehydration of (2R,3R)-2,3-dihydroxy-3-methylpentanoate (2,3-dihydroxy-3-methylvalerate) into 2-oxo-3-methylpentanoate (2-oxo-3-methylvalerate) and of (2R)-2,3-dihydroxy-3-methylbutanoate (2,3-dihydroxyisovalerate) into 2-oxo-3-methylbutanoate (2-oxoisovalerate), the penultimate precursor to L-isoleucine and L-valine, respectively. The protein is Dihydroxy-acid dehydratase of Brucella canis (strain ATCC 23365 / NCTC 10854 / RM-666).